Reading from the N-terminus, the 717-residue chain is Choline transporter-like protein 5 (717 aa).

A disordered region spans residues 1-24 (MNDTEKPADTASEEEDFGDPRTYD). Residues 1 to 38 (MNDTEKPADTASEEEDFGDPRTYDPDFKGPVSNRSCTD) lie on the Cytoplasmic side of the membrane. A helical membrane pass occupies residues 39-59 (VLCCMIFLLCIVGYIVLGLVA). Residues 60-242 (WVHGDPRRAA…KVFEDYATTW (183 aa)) are Extracellular-facing. N-linked (GlcNAc...) asparagine glycans are attached at residues N88 and N190. The helical transmembrane segment at 243–263 (YWILIGLMIAMVLSWIFLILL) threads the bilayer. Topologically, residues 264–265 (RF) are cytoplasmic. The chain crosses the membrane as a helical span at residues 266-286 (IAGCLFWVFMIGVIGIIGYGI). The Extracellular segment spans residues 287 to 325 (WHCYQQYTNLQEHPRSVLTVYDIGIQTNISMYFELQQTW). Residue N314 is glycosylated (N-linked (GlcNAc...) asparagine). The chain crosses the membrane as a helical span at residues 326–346 (FTLMIILCIIEVIVILMLIFL). The Cytoplasmic segment spans residues 347–351 (RNRIR). A helical membrane pass occupies residues 352 to 372 (VAIILLKEGSKAIGYVPSTLV). Residues 373–374 (YP) are Extracellular-facing. A helical transmembrane segment spans residues 375–395 (ALTFILLSICICYWVVTAVFL). The Cytoplasmic portion of the chain corresponds to 396 to 460 (ATSGVPVYKV…QYIPTFHVYN (65 aa)). The chain crosses the membrane as a helical span at residues 461-481 (LFVFLWLINFVIALGQCALAG). Over 482 to 515 (AFATYYWAMKKPDDIPRYPLFTAFGRAIRYHTGS) the chain is Extracellular. The chain crosses the membrane as a helical span at residues 516–536 (LAFGSLIIALIQMFKIVLEYL). Residues 537-610 (NHRLKRTENT…KVAVTDEVTY (74 aa)) are Cytoplasmic-facing. The helical transmembrane segment at 611–631 (FVLFLGKILVAGSIGVLAFLF) threads the bilayer. Residues 632-649 (FTQRLPVIAQGPASLNYY) are Extracellular-facing. A helical transmembrane segment spans residues 650 to 670 (WVPLLTVILGSYLIAHGFFSV). Over 671-717 (YAMCVETIFICFLEDLERNDGSTARPYYVSQPLLKIFQEENLQTKQQ) the chain is Cytoplasmic.

The protein belongs to the CTL (choline transporter-like) family.

Its subcellular location is the cell membrane. It catalyses the reaction choline(out) + n H(+)(in) = choline(in) + n H(+)(out). Functionally, choline/H+ antiporter. The sequence is that of Choline transporter-like protein 5 (SLC44A5) from Macaca fascicularis (Crab-eating macaque).